Reading from the N-terminus, the 492-residue chain is Aspartyl/glutamyl-tRNA(Asn/Gln) amidotransferase subunit B (492 aa).

It belongs to the GatB/GatE family. GatB subfamily. Heterotrimer of A, B and C subunits.

The enzyme catalyses L-glutamyl-tRNA(Gln) + L-glutamine + ATP + H2O = L-glutaminyl-tRNA(Gln) + L-glutamate + ADP + phosphate + H(+). It catalyses the reaction L-aspartyl-tRNA(Asn) + L-glutamine + ATP + H2O = L-asparaginyl-tRNA(Asn) + L-glutamate + ADP + phosphate + 2 H(+). Its function is as follows. Allows the formation of correctly charged Asn-tRNA(Asn) or Gln-tRNA(Gln) through the transamidation of misacylated Asp-tRNA(Asn) or Glu-tRNA(Gln) in organisms which lack either or both of asparaginyl-tRNA or glutaminyl-tRNA synthetases. The reaction takes place in the presence of glutamine and ATP through an activated phospho-Asp-tRNA(Asn) or phospho-Glu-tRNA(Gln). In Bradyrhizobium sp. (strain BTAi1 / ATCC BAA-1182), this protein is Aspartyl/glutamyl-tRNA(Asn/Gln) amidotransferase subunit B.